Consider the following 310-residue polypeptide: MTARLARPYAVLSIGAALATMGLKLGAYAITGSVGLLSDALESTVNLASAIVAFWALSLAATPADSEHPFGHSKAEYFSSGLEGAFIFVAALGIGYSAVERLLSPRPLDQNALGIALAIAATALNGTVAWILWRAGKRLNSIALRADSQHLMTDVWTSVGVVVAVALIFVTGWEWLDPLIALGVGFNVLWTGTHLLRETISSLMDQSLPPAQLQAITSCFLPYEDQGVRFHLLQTRQAGSQSFISFHVLVPGHWTVQRGHDLCEAIETAIAERITGSRVTTHLEPLEDPKSWQHPDEFPPSAPLNRDKPN.

The next 5 membrane-spanning stretches (helical) occupy residues 10-30 (AVLS…AYAI), 44-64 (TVNL…ATPA), 78-98 (FSSG…GYSA), 113-133 (LGIA…WILW), and 161-181 (VVVA…PLIA). Residues 285–297 (PLEDPKSWQHPDE) are compositionally biased toward basic and acidic residues. Residues 285 to 310 (PLEDPKSWQHPDEFPPSAPLNRDKPN) are disordered.

This sequence belongs to the cation diffusion facilitator (CDF) transporter (TC 2.A.4) family.

The protein resides in the cell membrane. This is an uncharacterized protein from Synechocystis sp. (strain ATCC 27184 / PCC 6803 / Kazusa).